The following is a 390-amino-acid chain: Malonyl-CoA-acyl carrier protein transacylase, mitochondrial (390 aa).

Residues 1-21 (MSVRVARVAWVRGLGASYRRG) constitute a mitochondrion transit peptide. Catalysis depends on residues Ser-153 and His-270. N6-succinyllysine is present on Lys-314.

It belongs to the type II malonyltransferase family.

Its subcellular location is the mitochondrion. The enzyme catalyses holo-[ACP] + malonyl-CoA = malonyl-[ACP] + CoA. It participates in lipid metabolism; fatty acid biosynthesis. Functionally, catalyzes the transfer of a malonyl moiety from malonyl-CoA to the free thiol group of the phosphopantetheine arm of the mitochondrial ACP protein (NDUFAB1). This suggests the existence of the biosynthesis of fatty acids in mitochondria. Also acts as a mitochondrial small ribosomal subunit (mt-SSU) assembly factor. In Homo sapiens (Human), this protein is Malonyl-CoA-acyl carrier protein transacylase, mitochondrial.